We begin with the raw amino-acid sequence, 185 residues long: Threonylcarbamoyl-AMP synthase (185 aa).

A YrdC-like domain is found at 5-185 (ADRIADAVAA…DLQSGETLRR (181 aa)).

It belongs to the SUA5 family. TsaC subfamily.

The protein localises to the cytoplasm. It catalyses the reaction L-threonine + hydrogencarbonate + ATP = L-threonylcarbamoyladenylate + diphosphate + H2O. Required for the formation of a threonylcarbamoyl group on adenosine at position 37 (t(6)A37) in tRNAs that read codons beginning with adenine. Catalyzes the conversion of L-threonine, HCO(3)(-)/CO(2) and ATP to give threonylcarbamoyl-AMP (TC-AMP) as the acyladenylate intermediate, with the release of diphosphate. This Chromohalobacter salexigens (strain ATCC BAA-138 / DSM 3043 / CIP 106854 / NCIMB 13768 / 1H11) protein is Threonylcarbamoyl-AMP synthase.